The following is a 365-amino-acid chain: Succinyl-diaminopimelate desuccinylase (365 aa).

His64 contributes to the Zn(2+) binding site. The active site involves Asp66. Position 95 (Asp95) interacts with Zn(2+). The active-site Proton acceptor is Glu125. The Zn(2+) site is built by Glu126, Glu154, and His339.

It belongs to the peptidase M20A family. DapE subfamily. In terms of assembly, homodimer. It depends on Zn(2+) as a cofactor. Co(2+) serves as cofactor.

It catalyses the reaction N-succinyl-(2S,6S)-2,6-diaminopimelate + H2O = (2S,6S)-2,6-diaminopimelate + succinate. The protein operates within amino-acid biosynthesis; L-lysine biosynthesis via DAP pathway; LL-2,6-diaminopimelate from (S)-tetrahydrodipicolinate (succinylase route): step 3/3. Its function is as follows. Catalyzes the hydrolysis of N-succinyl-L,L-diaminopimelic acid (SDAP), forming succinate and LL-2,6-diaminopimelate (DAP), an intermediate involved in the bacterial biosynthesis of lysine and meso-diaminopimelic acid, an essential component of bacterial cell walls. The sequence is that of Succinyl-diaminopimelate desuccinylase from Nautilia profundicola (strain ATCC BAA-1463 / DSM 18972 / AmH).